Here is a 195-residue protein sequence, read N- to C-terminus: MQVQRPPLEAWYMNDSEEDQRLPHHRNPPEYVTLEKLAALGVIHWVLDADNHETDPELSIIRKDRGYNYTDVITVCPEMLPSYEAKIKSFYEEHIHMDEEIRYCLDGSGYFDVRDPEDHWIRIWVRKGDMIVLPAGCYHRFTLDEHNYIMAMRLFVGEPIWTPYNRPQDEHPVRKGYVHQFLQPELLDVDMSISA.

His94, His96, Glu100, and His139 together coordinate Fe(2+). The Ni(2+) site is built by His94, His96, Glu100, and His139.

This sequence belongs to the acireductone dioxygenase (ARD) family. The cofactor is Fe(2+). Requires Ni(2+) as cofactor.

Its subcellular location is the cytoplasm. The protein resides in the nucleus. The enzyme catalyses 1,2-dihydroxy-5-(methylsulfanyl)pent-1-en-3-one + O2 = 4-methylsulfanyl-2-oxobutanoate + formate + 2 H(+). The catalysed reaction is 1,2-dihydroxy-5-(methylsulfanyl)pent-1-en-3-one + O2 = 3-(methylsulfanyl)propanoate + CO + formate + 2 H(+). Its pathway is amino-acid biosynthesis; L-methionine biosynthesis via salvage pathway; L-methionine from S-methyl-5-thio-alpha-D-ribose 1-phosphate: step 5/6. Its function is as follows. Catalyzes 2 different reactions between oxygen and the acireductone 1,2-dihydroxy-3-keto-5-methylthiopentene (DHK-MTPene) depending upon the metal bound in the active site. Fe-containing acireductone dioxygenase (Fe-ARD) produces formate and 2-keto-4-methylthiobutyrate (KMTB), the alpha-ketoacid precursor of methionine in the methionine recycle pathway. Ni-containing acireductone dioxygenase (Ni-ARD) produces methylthiopropionate, carbon monoxide and formate, and does not lie on the methionine recycle pathway. The protein is Acireductone dioxygenase 2 of Physcomitrium patens (Spreading-leaved earth moss).